We begin with the raw amino-acid sequence, 494 residues long: 3-octaprenyl-4-hydroxybenzoate carboxy-lyase (494 aa).

A Mn(2+)-binding site is contributed by N172. Prenylated FMN-binding positions include 175–177 (IYR), 189–191 (RWL), and 194–195 (RG). E238 serves as a coordination point for Mn(2+). D287 acts as the Proton donor in catalysis.

It belongs to the UbiD family. In terms of assembly, homohexamer. Requires prenylated FMN as cofactor. It depends on Mn(2+) as a cofactor.

It localises to the cell membrane. It catalyses the reaction a 4-hydroxy-3-(all-trans-polyprenyl)benzoate + H(+) = a 2-(all-trans-polyprenyl)phenol + CO2. It participates in cofactor biosynthesis; ubiquinone biosynthesis. Catalyzes the decarboxylation of 3-octaprenyl-4-hydroxy benzoate to 2-octaprenylphenol, an intermediate step in ubiquinone biosynthesis. This Citrobacter koseri (strain ATCC BAA-895 / CDC 4225-83 / SGSC4696) protein is 3-octaprenyl-4-hydroxybenzoate carboxy-lyase.